The chain runs to 685 residues: Twinkle mtDNA helicase (685 aa).

The transit peptide at 1–31 (MWLLLRRAYPLRILLPLRGEWVGRRGLPRSL) directs the protein to the mitochondrion. The segment at 1–122 (MWLLLRRAYP…LCMTSLAEGS (122 aa)) is contributes to single strand DNA binding activity. The interval 54-214 (PVTTTEIRQY…LVFPWFTPGS (161 aa)) is N-terminal region (NTR). Positions 122 to 373 (SWEDLQASVE…WHKSIVSFRQ (252 aa)) are required for hexamers formation and DNA helicase activity. Residues 215–335 (SGLRGLKLLG…LNPKRCSLVR (121 aa)) are primase-like domain. The SF4 helicase domain maps to 385–636 (VEQAAGVRWS…LTFSIPPKSK (252 aa)). The interval 406-591 (HRKGELTVFT…QEADNVLILQ (186 aa)) is maybe required for stable oligomeric structure. 416–423 (GPTGSGKT) is a binding site for ATP. Residues 454 to 482 (RVMLTQFAVTRLEEQLDKYEEWADRFEDL) adopt a coiled-coil conformation. Residues 641-685 (KIKDDNGLVAKKSSSGKKGAAHQNPEICLGQDPSPAQPDTSKSSG) are might negatively regulate ATPase activity. Positions 642–685 (IKDDNGLVAKKSSSGKKGAAHQNPEICLGQDPSPAQPDTSKSSG) are disordered.

Homohexamer (via C-terminus), which assembles in a ring-like structure. Homoheptamer, which assembles in a ring-like structure. Homooctamer, which assembles in a ring-like structure. Oligomers may sequentially eject two monomers (octamer&gt;heptamer&gt;hexamer) upon DNA binding. Oligomerization is Mg(2+), nucleotide and DNA-independent, however, Mg(2+) and nucleotide stabilize the homohexameric form. Interacts with POLG in vitro. Interacts with LONP1. Ubiquitous with the highest levels in the liver, heart and kidneys. The skeletal muscle, brain and testis showed lower but detectable expression. Expression is coregulated with MRPL43.

It localises to the mitochondrion matrix. The protein resides in the mitochondrion nucleoid. It is found in the mitochondrion inner membrane. It catalyses the reaction ATP + H2O = ADP + phosphate + H(+). The catalysed reaction is Couples ATP hydrolysis with the unwinding of duplex DNA at the replication fork by translocating in the 5'-3' direction. This creates two antiparallel DNA single strands (ssDNA). The leading ssDNA polymer is the template for DNA polymerase III holoenzyme which synthesizes a continuous strand.. In terms of biological role, mitochondrial helicase involved in mtDNA replication and repair. Might have a role in mtDNA repair. Has DNA strand separation activity needed to form a processive replication fork for leading strand synthesis which is catalyzed by the formation of a replisome complex with POLG and mtSDB. Preferentially unwinds DNA substrates with pre-existing 5'-and 3'- single-stranded tails but is also active on a 5'- flap substrate. Can dissociate the invading strand of immobile or mobile D-loop DNA structures irrespective of the single strand polarity of the third strand. In addition to its DNA strand separation activity, also has DNA strand annealing, DNA strand-exchange and DNA branch migration activities. The sequence is that of Twinkle mtDNA helicase from Mus musculus (Mouse).